Reading from the N-terminus, the 191-residue chain is Zinc finger protein GIS2 (191 aa).

A C2H2-type zinc finger spans residues 55–77; the sequence is FKCHYCFRNFPTSQALGGHQNAH.

In terms of tissue distribution, expressed in inflorescence meristems, floral meristems and stem epidermis.

Its subcellular location is the nucleus. Its function is as follows. Probable transcription factor required for the initiation of inflorescence trichomes in response to gibberellin and cytokinin. Is not involved in the regulation of trichome branching. Is functionally equivalent to ZFP8. This Arabidopsis thaliana (Mouse-ear cress) protein is Zinc finger protein GIS2 (GIS2).